The chain runs to 879 residues: MPTEANTYDPQRIESIAQHYWDSTHAFEVNEHSNKPKYYCLSMLPYPSGALHMGHVRNYTIGDVISRYKRMTGHNVLQPMGWDAFGLPAENAAIKNKVAPAQWTYKNIERMRTQLKSLGYAINWSREFATCQPDYYVHEQHMFTRLMRKGLAYRRNALVNWDPVDQTVLANEQVIDGRGWRSGAPVEKREIPQWFLRITDYAQELLDGLNTLDDWPEPVKTMQRNWIGRSEGLEIRFEVRDVDNNALEALRVFTTRPDTLFGVTFVSIAPEHPLALHAAKSNPGLAGLLTQMKQGGLSEAELKTQEKRGMDTGLKAIHPITNEQLPVWVANFVLMAYGTGAVMAVPGHDQRDQEFANKYGLPIRQVIALKEPKNQDESTWEPDVWRDWYADKTREFELINSAEFDGLDYQGAFEVLVERFERQGRGQRRVNYRLRDWGVSRQRYWGCPIPVIYCPTCGAVPVPENQLPVILPENVAFSGTGSPIKTDSEWRKTTCPECGGPAERETDTFDTFMESSWYYARYTSPNAREMLDKRANYWLPVDQYIGGIEHAILHLMYFRFYHKLMRDARLVDSDEPAINLLTQGMVIAETFYRKNPDGSKDWINPADVNVECDERGRITGATLISDGQPVLIGATEKMSKSKNNGVDPQIMVTKYGADTVRLFSMFAAPPEQSLEWNEAGVEGMARFLRRLWTQVHHHASHGPATALDITALDTAQKAIRCKTHNTIARVEDDYGRRRSFNTAIAAVMELSNTLARFDDTTTQSHAVRQEALETMVLLLNPITPHTSHALWQTLGHPETLLEDLPFPKVDTTALVRETATLAVQVNGKLRGTIEVATDAPREHIENNALTEPNTARFLEGLTVLKIIIVPGKIVNIVAR.

The 'HIGH' region signature appears at 45-55 (PYPSGALHMGH). The short motif at 637 to 641 (KMSKS) is the 'KMSKS' region element. Lys-640 contributes to the ATP binding site.

Belongs to the class-I aminoacyl-tRNA synthetase family.

The protein localises to the cytoplasm. It carries out the reaction tRNA(Leu) + L-leucine + ATP = L-leucyl-tRNA(Leu) + AMP + diphosphate. The protein is Leucine--tRNA ligase of Xylella fastidiosa (strain M12).